A 179-amino-acid chain; its full sequence is Nucleoside-triphosphatase THEP1 (179 aa).

Residues 7 to 14 (GMPGVGKT) and 98 to 105 (IIIIDEIG) contribute to the ATP site.

Belongs to the THEP1 NTPase family.

It carries out the reaction a ribonucleoside 5'-triphosphate + H2O = a ribonucleoside 5'-diphosphate + phosphate + H(+). Has nucleotide phosphatase activity towards ATP, GTP, CTP, TTP and UTP. May hydrolyze nucleoside diphosphates with lower efficiency. This Pyrococcus abyssi (strain GE5 / Orsay) protein is Nucleoside-triphosphatase THEP1.